Here is a 1094-residue protein sequence, read N- to C-terminus: MGSVDTSVPSFDRAWSIKYEDLDFISEIGSGGFGKVFKGEYLGAPVAIKKIHILPDDPNRVDLEKFLNREIETIKLFTHPNVIQFVGISENNGILFIVTELIEGGDLQYYLKNQSIDLPWFLRANIALDVSLAMSYLHSKSIVHRDLKSTNLLVDKNWKIKVCDFGFARIVEEDNNKSMTICGTDNWMSPEMITGLDYDERSDIFSFGIVLLEIISRVKPAPYMRDASFGLAEDIVRNQLIPTDCPESLIDLTFNCCSVDPNNRPSFKEISQTLKQIKTTLDSNIVYPEIRDFEQQQKISTTNGNNKQNGGAPKINNLPLQYSNNNNNIYDDDDDDDDDDDDNDSFPRPYSDNSNSNVTLESNSNYNSSTINGQEQQEQQEQQQQQQVKEERDEGEIEQDDDNIEVYDSDYQKKLEEHQKELLERQNQNQEGSTDENEVYEQEEEEEEEDEEEQVISTPAKKRISFGQDTFHTYEAYRTDDEDDDDDEEDEEEGDEYDHGYDDFDEDDEDDEEYDEDEDDEDERQIQYYQQQLQYQQQLQKQQEQEYQRQQQLQLQREEEEYQRQLQQQQQQQQQQQQQQQQHQQQYDDDDDDDDEEEEEYDDVIRHDTDSEEESKDKTPLPWDQHFEKQKESENKVEQEETNVVVANSQETEQQQQQQQQPKEEEEEEPTKVEDVKVETEEQTKEEHDVKVDEESTKVDEPVDEPTKVEESVEQVKAEEPNKVEELVEEVKVEEEPTNVEEVKAEEPVEEVKVEEPVEEVKAEEPVEEVKAEEPVEEVKTEEPVEEVKVEEPVEEVKVEEPVEEVEAEESVQEPVEEVKVDEPTKVEEPTKVEEPIEEVKVEEPTKVEESIEEVKVEEPTKVEEPVEEIKPEEPTKVEESVEDVKVEDVKVEEVKAEEPTKAEESVEDVKVEEPIKVEEPVKVEEPVKVEEPVKVEEPIKVEEPIKVEEPIKVEEPIKVEEPIKVEEPVKVEVASPVVQEQPPQQEEKPEVVSTSTITIASSPQQSSNSPPSTPVKQPQQQEIEVNSTPIKQQQQQQQTPTQQTQTPTKQHTEINVQPTPTKTPPLPPQTNEKIPLISPNNKSNRGCCSCFIQ.

In terms of domain architecture, Protein kinase spans 22 to 281 (LDFISEIGSG…QTLKQIKTTL (260 aa)). ATP contacts are provided by residues 28–36 (IGSGGFGKV) and K49. D146 acts as the Proton acceptor in catalysis. Disordered stretches follow at residues 301–884 (TTNG…SVED) and 946–1083 (IKVE…PNNK). Residues 330–344 (YDDDDDDDDDDDDND) show a composition bias toward acidic residues. Over residues 351-373 (SDNSNSNVTLESNSNYNSSTING) the composition is skewed to polar residues. Low complexity predominate over residues 374-387 (QEQQEQQEQQQQQQ). Positions 393-408 (DEGEIEQDDDNIEVYD) are enriched in acidic residues. Residues 410-424 (DYQKKLEEHQKELLE) show a composition bias toward basic and acidic residues. 3 stretches are compositionally biased toward acidic residues: residues 433–454 (STDE…EEEQ), 480–496 (DDED…EGDE), and 503–523 (DFDE…DEDE). 2 stretches are compositionally biased toward low complexity: residues 526–542 (IQYY…LQKQ) and 564–585 (RQLQ…QHQQ). Positions 587 to 602 (YDDDDDDDDEEEEEYD) are enriched in acidic residues. Over residues 603-639 (DVIRHDTDSEEESKDKTPLPWDQHFEKQKESENKVEQ) the composition is skewed to basic and acidic residues. Residues 650–661 (QETEQQQQQQQQ) show a composition bias toward low complexity. Positions 670-801 (PTKVEDVKVE…EPVEEVKVEE (132 aa)) are enriched in basic and acidic residues. Residues 676 to 978 (VKVETEEQTK…PVKVEVASPV (303 aa)) are 40 X 9 AA approximate repeats of V-K-V-E-E-P-V-E-E. The span at 802–816 (PVEEVEAEESVQEPV) shows a compositional bias: acidic residues. 2 stretches are compositionally biased toward basic and acidic residues: residues 817–884 (EEVK…SVED) and 946–971 (IKVE…EPVK). Composition is skewed to low complexity over residues 972 to 985 (VEVA…QPPQ) and 992 to 1011 (VVST…SNSP). Positions 1016–1031 (VKQPQQQEIEVNSTPI) are enriched in polar residues. Residues 1032–1050 (KQQQQQQQTPTQQTQTPTK) are compositionally biased toward low complexity.

The protein belongs to the protein kinase superfamily. TKL Ser/Thr protein kinase family.

The enzyme catalyses L-seryl-[protein] + ATP = O-phospho-L-seryl-[protein] + ADP + H(+). The catalysed reaction is L-threonyl-[protein] + ATP = O-phospho-L-threonyl-[protein] + ADP + H(+). The protein is Probable serine/threonine-protein kinase kinX (kinX) of Dictyostelium discoideum (Social amoeba).